Consider the following 430-residue polypeptide: MHRSLSLRAVVCLSTLLPASLLYAAPDVDIETLKQELLELKQRYEAQQKALAVLEQRVRQVEDQPATPAPKRLAKSPADFKQSGSTVAASSGTGGATGGSSYGQSLKDDSEPAQSVSNLYNEASGFFGNGKFSFETGITYARYDARQLTLNGFLALDSIFLGNINLDRIKADNWTLDLTGRYNLDNRWQFDVNVPVVYRESTYQSGGASGGDPQATSEESVSRDPTIGDVNFGIAYKFLDESATMPDAVVSVRVKAPTGKEPFGIKLVRSTANDNLYVPESLPTGNGVWSITPGLSLVKTFDPAVLFGSVSYTHNLEDSFDDISSDVNQKVGGKVRLGDSFQFGVGVAFALNERMSMSFSVSDLIQRKSKLKPDGGGWQSIVSSDANAGYFNVGMTIAASENLTIVPNLAIGMTDDAPDFTFSLKFPYYF.

The N-terminal stretch at 1-24 (MHRSLSLRAVVCLSTLLPASLLYA) is a signal peptide. Residues 25 to 131 (APDVDIETLK…EASGFFGNGK (107 aa)) lie on the Periplasmic side of the membrane. A coiled-coil region spans residues 29-64 (DIETLKQELLELKQRYEAQQKALAVLEQRVRQVEDQ). The interval 62 to 114 (EDQPATPAPKRLAKSPADFKQSGSTVAASSGTGGATGGSSYGQSLKDDSEPAQ) is disordered. Over residues 92 to 101 (GTGGATGGSS) the composition is skewed to gly residues. The segment at 113–125 (AQSVSNLYNEASG) is alpha helical plug. Residues 132–142 (FSFETGITYAR) traverse the membrane as a beta stranded segment. Topologically, residues 143 to 172 (YDARQLTLNGFLALDSIFLGNINLDRIKAD) are extracellular. Residues 173-183 (NWTLDLTGRYN) traverse the membrane as a beta stranded segment. At 184–189 (LDNRWQ) the chain is on the periplasmic side. A beta stranded transmembrane segment spans residues 190–198 (FDVNVPVVY). Residues 199–224 (RESTYQSGGASGGDPQATSEESVSRD) lie on the Extracellular side of the membrane. The disordered stretch occupies residues 203–223 (YQSGGASGGDPQATSEESVSR). The beta stranded transmembrane segment at 225-238 (PTIGDVNFGIAYKF) threads the bilayer. The Periplasmic portion of the chain corresponds to 239 to 246 (LDESATMP). A beta stranded membrane pass occupies residues 247–256 (DAVVSVRVKA). Residues 257 to 288 (PTGKEPFGIKLVRSTANDNLYVPESLPTGNGV) are Extracellular-facing. The beta stranded transmembrane segment at 289–298 (WSITPGLSLV) threads the bilayer. At 299 to 304 (KTFDPA) the chain is on the periplasmic side. Residues 305 to 314 (VLFGSVSYTH) form a beta stranded membrane-spanning segment. Residues 315-339 (NLEDSFDDISSDVNQKVGGKVRLGD) lie on the Extracellular side of the membrane. Residues 340 to 348 (SFQFGVGVA) form a beta stranded membrane-spanning segment. Over 349–356 (FALNERMS) the chain is Periplasmic. Residues 357-365 (MSFSVSDLI) form a beta stranded membrane-spanning segment. Topologically, residues 366-386 (QRKSKLKPDGGGWQSIVSSDA) are extracellular. Residues 387 to 397 (NAGYFNVGMTI) traverse the membrane as a beta stranded segment. Topologically, residues 398–404 (AASENLT) are periplasmic. A beta stranded transmembrane segment spans residues 405 to 412 (IVPNLAIG). Over 413 to 419 (MTDDAPD) the chain is Extracellular. A beta stranded transmembrane segment spans residues 420 to 428 (FTFSLKFPY). At 429-430 (YF) the chain is on the periplasmic side.

The protein belongs to the amyloid transporter (TC 9.B.153) family. As to quaternary structure, homotrimer.

It localises to the cell outer membrane. Its function is as follows. Transports fibril components across the outer membrane. Upon overexpression of the endogenous six-gene locus (fapA-fapF) in situ cells form large clumps during liquid growth, make large amounts of biofilm and produce amyloid fibrils. Expression of the 6 gene operon in E.coli strain BL21(DE3) induces flocculation and biofilm formation with copious extracellular fibrils. The chain is Functional amyloid transporter FapF from Pseudomonas fluorescens.